The chain runs to 473 residues: Argininosuccinate lyase (473 aa).

The protein belongs to the lyase 1 family. Argininosuccinate lyase subfamily.

It is found in the cytoplasm. It carries out the reaction 2-(N(omega)-L-arginino)succinate = fumarate + L-arginine. The protein operates within amino-acid biosynthesis; L-arginine biosynthesis; L-arginine from L-ornithine and carbamoyl phosphate: step 3/3. This Nocardia farcinica (strain IFM 10152) protein is Argininosuccinate lyase.